The chain runs to 670 residues: PML-RARA-regulated adapter molecule 1 (670 aa).

Positions 1-561 (MAHHLPAAME…PQQLPPMDPK (561 aa)) are disordered. Residues 31–43 (DLPKKPPKPEFGK) show a composition bias toward basic and acidic residues. 4 tandem repeats follow at residues 70–81 (KPPPPEVTDLPK), 82–93 (KPPPPEVTDLPK), 94–105 (KPPPPEVTDLPK), and 106–117 (KPPPPEVTDLPK). The interval 70–165 (KPPPPEVTDL…SLPEPGAPAR (96 aa)) is 4 X 12 AA repeats of K-P-P-[PQ]-P-[EQ]-[VAF]-T-D-L-P-K. Positions 114–129 (DLPKKPSKLELSDLSK) are enriched in basic and acidic residues. Ser340 is subject to Phosphoserine. Residues 386-398 (SSASESSLPAAVA) show a composition bias toward low complexity. A compositionally biased stretch (pro residues) spans 454–463 (PAKPPLPPGP). Positions 504–514 (EIYELYDDVEP) are enriched in acidic residues. Over residues 515-528 (RDDSSPSPKGRDEA) the composition is skewed to basic and acidic residues. The 79-residue stretch at 571 to 649 (KAEREFRKKF…PRTALLPLET (79 aa)) folds into the SH3 domain.

As to quaternary structure, interacts with SKAP2, LCP2 and DBNL. May interact with LYN. Interacts with NEK6. Post-translationally, may be phosphorylated on tyrosines. Expressed in peripheral blood leukocytes and bone marrow. Expressed in monocytes, and to a lesser extent in granulocytes and lymphocytes. Not expressed in non hematopoietic tissues except in lung.

May be involved in myeloid differentiation. May be involved in integrin signaling in neutrophils. Binds to PtdIns(4)P. This Homo sapiens (Human) protein is PML-RARA-regulated adapter molecule 1 (PRAM1).